A 273-amino-acid polypeptide reads, in one-letter code: Shikimate dehydrogenase (NADP(+)) (273 aa).

Residues 15-17 (SLS) and Thr62 each bind shikimate. Residue Lys66 is the Proton acceptor of the active site. Glu78 contributes to the NADP(+) binding site. Shikimate-binding residues include Asn87 and Asp102. NADP(+)-binding positions include 126–130 (GAGGA), 149–154 (NRTPER), Ile215, and Gly238.

It belongs to the shikimate dehydrogenase family. Homodimer.

The catalysed reaction is shikimate + NADP(+) = 3-dehydroshikimate + NADPH + H(+). It participates in metabolic intermediate biosynthesis; chorismate biosynthesis; chorismate from D-erythrose 4-phosphate and phosphoenolpyruvate: step 4/7. Its function is as follows. Involved in the biosynthesis of the chorismate, which leads to the biosynthesis of aromatic amino acids. Catalyzes the reversible NADPH linked reduction of 3-dehydroshikimate (DHSA) to yield shikimate (SA). The protein is Shikimate dehydrogenase (NADP(+)) of Desulfitobacterium hafniense (strain Y51).